The primary structure comprises 127 residues: Photosystem II reaction center Psb28 protein (127 aa).

The interval 107 to 127 (GLGYSQNQNSDQTDGDANAEA) is disordered. Positions 109–118 (GYSQNQNSDQ) are enriched in polar residues.

This sequence belongs to the Psb28 family. Part of the photosystem II complex.

Its subcellular location is the cellular thylakoid membrane. The sequence is that of Photosystem II reaction center Psb28 protein from Parasynechococcus marenigrum (strain WH8102).